Here is a 485-residue protein sequence, read N- to C-terminus: ATP synthase subunit beta (485 aa).

The segment covering 1 to 11 has biased composition (basic and acidic residues); sequence MPATETADKNT. The segment at 1-20 is disordered; the sequence is MPATETADKNTKSANSDTSG. ATP is bound at residue 170 to 177; it reads GGAGVGKT.

Belongs to the ATPase alpha/beta chains family. As to quaternary structure, F-type ATPases have 2 components, CF(1) - the catalytic core - and CF(0) - the membrane proton channel. CF(1) has five subunits: alpha(3), beta(3), gamma(1), delta(1), epsilon(1). CF(0) has three main subunits: a(1), b(2) and c(9-12). The alpha and beta chains form an alternating ring which encloses part of the gamma chain. CF(1) is attached to CF(0) by a central stalk formed by the gamma and epsilon chains, while a peripheral stalk is formed by the delta and b chains.

It localises to the cell membrane. The enzyme catalyses ATP + H2O + 4 H(+)(in) = ADP + phosphate + 5 H(+)(out). Its function is as follows. Produces ATP from ADP in the presence of a proton gradient across the membrane. The catalytic sites are hosted primarily by the beta subunits. The chain is ATP synthase subunit beta from Mycobacterium avium (strain 104).